The following is a 370-amino-acid chain: Spermidine/putrescine import ATP-binding protein PotA 1 (370 aa).

The 239-residue stretch at 12–250 (VSIRAVRKVY…PGNRFVADFI (239 aa)) folds into the ABC transporter domain. ATP is bound at residue 48–55 (GPSGCGKT).

It belongs to the ABC transporter superfamily. Spermidine/putrescine importer (TC 3.A.1.11.1) family. In terms of assembly, the complex is composed of two ATP-binding proteins (PotA), two transmembrane proteins (PotB and PotC) and a solute-binding protein (PotD).

Its subcellular location is the cell inner membrane. The catalysed reaction is ATP + H2O + polyamine-[polyamine-binding protein]Side 1 = ADP + phosphate + polyamineSide 2 + [polyamine-binding protein]Side 1.. Functionally, part of the ABC transporter complex PotABCD involved in spermidine/putrescine import. Responsible for energy coupling to the transport system. The chain is Spermidine/putrescine import ATP-binding protein PotA 1 from Pseudomonas aeruginosa (strain ATCC 15692 / DSM 22644 / CIP 104116 / JCM 14847 / LMG 12228 / 1C / PRS 101 / PAO1).